The sequence spans 471 residues: Alpha-galactosidase (471 aa).

The first 18 residues, 1–18 (MSYIYLFITAAAVTGALG), serve as a signal peptide directing secretion. C42 and C74 are disulfide-bonded. Residues D72 and D73 each coordinate substrate. N-linked (GlcNAc...) asparagine glycosylation occurs at N82. C121 and C151 are oxidised to a cystine. Substrate is bound at residue K147. Residue D149 is the Nucleophile of the active site. N175 carries N-linked (GlcNAc...) asparagine glycosylation. R205 serves as a coordination point for substrate. The Proton donor role is filled by D209. Cystine bridges form between C221-C237 and C223-C230. Q251 contacts substrate. 7 N-linked (GlcNAc...) asparagine glycosylation sites follow: N270, N361, N370, N417, N422, N435, and N454.

Belongs to the glycosyl hydrolase 27 family. As to quaternary structure, homotetramer.

The protein resides in the secreted. It catalyses the reaction Hydrolysis of terminal, non-reducing alpha-D-galactose residues in alpha-D-galactosides, including galactose oligosaccharides, galactomannans and galactolipids.. In Saccharomyces mikatae (Yeast), this protein is Alpha-galactosidase (MEL).